A 994-amino-acid chain; its full sequence is Translocase of chloroplast 108, chloroplastic (994 aa).

Disordered regions lie at residues 14–61 (KEAS…EDEP), 84–124 (TTDL…DPSV), and 152–287 (AVDG…DETR). Polar residues-rich tracts occupy residues 37–53 (GETT…ANES) and 84–98 (TTDL…TPSN). Residues 99-121 (AEKESPEATEVRIVEEGKLEKAD) are compositionally biased toward basic and acidic residues. A compositionally biased stretch (acidic residues) spans 166 to 197 (NDGDTDANTADEDNENDEDDVDEDEDEDDADM). Residues 249-268 (ASDSPGRNTQRPNGALSTQI) show a composition bias toward polar residues. The span at 269–280 (TSTTDESASSDA) shows a compositional bias: low complexity. Residues 360-589 (DFACTILVLG…KLQETTAPGR (230 aa)) form the AIG1-type G domain. Residues 369-376 (GKTGVGKS) form a G1 region. GTP is bound at residue 372–377 (GVGKSS). Position 376 (Ser376) interacts with Mg(2+). Positions 395–399 (PSTNK) are G2. Positions 416 to 419 (DTPG) are G3. Residues 488 to 491 (THAS) form a G4 region. GTP contacts are provided by residues His489 and 537–538 (EN). The tract at residues 537-539 (ENH) is G5. Disordered stretches follow at residues 616–659 (LPDE…EDLT) and 691–716 (EAKK…EAGN). Residues 620–643 (QAGESDESDDDEEEEDSDADDYDE) show a composition bias toward acidic residues. The span at 650–659 (LSKEELEDLT) shows a compositional bias: basic and acidic residues. Over residues 705–714 (AEAEEAEDEA) the composition is skewed to acidic residues. The chain crosses the membrane as a helical span at residues 969-989 (MVLIGIVPILRSLINCRFGFG).

This sequence belongs to the TRAFAC class TrmE-Era-EngA-EngB-Septin-like GTPase superfamily. AIG1/Toc34/Toc159-like paraseptin GTPase family. TOC159 subfamily. In terms of assembly, part of the TOC core complex. Requires Mg(2+) as cofactor.

It localises to the plastid. The protein localises to the chloroplast outer membrane. Its function is as follows. GTPase involved in protein precursor import into chloroplasts. Seems to recognize chloroplast-destined precursor proteins and regulate their presentation to the translocation channel through GTP hydrolysis. Probably specialized in the import of nuclear encoded non-photosynthetic preproteins from the cytoplasm to the chloroplast. The chain is Translocase of chloroplast 108, chloroplastic from Physcomitrium patens (Spreading-leaved earth moss).